A 576-amino-acid polypeptide reads, in one-letter code: Phosphoenolpyruvate-protein phosphotransferase (576 aa).

Catalysis depends on His-189, which acts as the Tele-phosphohistidine intermediate. Phosphoenolpyruvate contacts are provided by Arg-296 and Arg-332. Mg(2+)-binding residues include Glu-431 and Asp-455. Phosphoenolpyruvate contacts are provided by residues 454-455 (ND) and Arg-465. Residue Cys-502 is the Proton donor of the active site.

This sequence belongs to the PEP-utilizing enzyme family. Homodimer. Mg(2+) serves as cofactor.

The protein resides in the cytoplasm. The catalysed reaction is L-histidyl-[protein] + phosphoenolpyruvate = N(pros)-phospho-L-histidyl-[protein] + pyruvate. In terms of biological role, general (non sugar-specific) component of the phosphoenolpyruvate-dependent sugar phosphotransferase system (sugar PTS). This major carbohydrate active-transport system catalyzes the phosphorylation of incoming sugar substrates concomitantly with their translocation across the cell membrane. Enzyme I transfers the phosphoryl group from phosphoenolpyruvate (PEP) to the phosphoryl carrier protein (HPr). The sequence is that of Phosphoenolpyruvate-protein phosphotransferase (ptsI) from Buchnera aphidicola subsp. Baizongia pistaciae (strain Bp).